We begin with the raw amino-acid sequence, 405 residues long: S-arrestin (405 aa).

At Thr234 the chain carries Phosphothreonine.

The protein belongs to the arrestin family. Monomer. Homodimer. Homotetramer. Interacts with RHO (via the phosphorylated C-terminus). Detected in retina, in the proximal portion of the outer segment of rod photoreceptor cells (at protein level).

The protein resides in the cell projection. The protein localises to the cilium. Its subcellular location is the photoreceptor outer segment. It is found in the membrane. Binds to photoactivated, phosphorylated RHO and terminates RHO signaling via G-proteins by competing with G-proteins for the same binding site on RHO. May play a role in preventing light-dependent degeneration of retinal photoreceptor cells. The chain is S-arrestin (SAG) from Homo sapiens (Human).